A 246-amino-acid polypeptide reads, in one-letter code: MAHILMKQLLEAGVHFGHQTKRWCPKMKEYIFSERNGIHIIDLQKTLVKLEEAYEFAKEQAKEGKTFLFVGTKKQAQQTIEEEAKRCGAFYVNQRWLGGMLTNFTTIKSRIDYMIKLEELKNNGYFDKLPKKQANRLNRELEKLIKVFDGLRGIERIPDVLYIVDPKREEIAVKEANKLGIPIIAIVDTNCDPELITYPIPGNDDAIRSIKLITSKIADAILEGRDLREKEADLQLKDEDLQSEIS.

This sequence belongs to the universal ribosomal protein uS2 family.

The sequence is that of Small ribosomal subunit protein uS2 from Dictyoglomus turgidum (strain DSM 6724 / Z-1310).